We begin with the raw amino-acid sequence, 324 residues long: Acetyl-coenzyme A carboxylase carboxyl transferase subunit alpha (324 aa).

The CoA carboxyltransferase C-terminal domain maps to 37-291; that stretch reads ILEDKLENLE…DLMLRKTFEQ (255 aa).

It belongs to the AccA family. Acetyl-CoA carboxylase is a heterohexamer composed of biotin carboxyl carrier protein (AccB), biotin carboxylase (AccC) and two subunits each of ACCase subunit alpha (AccA) and ACCase subunit beta (AccD).

The protein resides in the cytoplasm. It carries out the reaction N(6)-carboxybiotinyl-L-lysyl-[protein] + acetyl-CoA = N(6)-biotinyl-L-lysyl-[protein] + malonyl-CoA. It functions in the pathway lipid metabolism; malonyl-CoA biosynthesis; malonyl-CoA from acetyl-CoA: step 1/1. Component of the acetyl coenzyme A carboxylase (ACC) complex. First, biotin carboxylase catalyzes the carboxylation of biotin on its carrier protein (BCCP) and then the CO(2) group is transferred by the carboxyltransferase to acetyl-CoA to form malonyl-CoA. The polypeptide is Acetyl-coenzyme A carboxylase carboxyl transferase subunit alpha (Bacillus cereus (strain Q1)).